Consider the following 250-residue polypeptide: 3-deoxy-manno-octulosonate cytidylyltransferase (250 aa).

Belongs to the KdsB family.

The protein localises to the cytoplasm. The catalysed reaction is 3-deoxy-alpha-D-manno-oct-2-ulosonate + CTP = CMP-3-deoxy-beta-D-manno-octulosonate + diphosphate. The protein operates within nucleotide-sugar biosynthesis; CMP-3-deoxy-D-manno-octulosonate biosynthesis; CMP-3-deoxy-D-manno-octulosonate from 3-deoxy-D-manno-octulosonate and CTP: step 1/1. It participates in bacterial outer membrane biogenesis; lipopolysaccharide biosynthesis. In terms of biological role, activates KDO (a required 8-carbon sugar) for incorporation into bacterial lipopolysaccharide in Gram-negative bacteria. This Legionella pneumophila (strain Paris) protein is 3-deoxy-manno-octulosonate cytidylyltransferase.